A 133-amino-acid chain; its full sequence is FK506-binding protein 2 (133 aa).

Residues 1–20 form the signal peptide; the sequence is MKLLYCLLLVILALVGLSSG. The region spanning 45–133 is the PPIase FKBP-type domain; the sequence is GDKLKIHYTG…IFDVELIGIN (89 aa).

Belongs to the FKBP-type PPIase family.

It carries out the reaction [protein]-peptidylproline (omega=180) = [protein]-peptidylproline (omega=0). With respect to regulation, inhibited by both FK506 and rapamycin. Its function is as follows. PPIases accelerate the folding of proteins by catalyzing the cis-trans isomerization of proline imidic peptide bonds in oligopeptides. The polypeptide is FK506-binding protein 2 (fkbp2) (Dictyostelium discoideum (Social amoeba)).